Here is a 242-residue protein sequence, read N- to C-terminus: Glutamate transport ATP-binding protein GluA (242 aa).

Residues 2–236 (IKMTGVQKFF…PQTDRAKDFL (235 aa)) form the ABC transporter domain. 34–41 (GPSGSGKS) contacts ATP.

This sequence belongs to the ABC transporter superfamily. The complex is composed of two ATP-binding proteins (GluA), two transmembrane proteins (GluC and GluD) and a solute-binding protein (GluB).

It is found in the cell membrane. It catalyses the reaction a polar amino acid(out) + ATP + H2O = a polar amino acid(in) + ADP + phosphate + H(+). The catalysed reaction is L-glutamate(out) + ATP + H2O = L-glutamate(in) + ADP + phosphate + H(+). Its function is as follows. Part of the ABC transporter complex GluABCD involved in glutamate uptake. Probably responsible for energy coupling to the transport system. The chain is Glutamate transport ATP-binding protein GluA from Corynebacterium efficiens (strain DSM 44549 / YS-314 / AJ 12310 / JCM 11189 / NBRC 100395).